Reading from the N-terminus, the 477-residue chain is Bifunctional protein HldE (477 aa).

The interval 1–318 (MKVTLPEFER…ENAVRGRADT (318 aa)) is ribokinase. K179 bears the N6-acetyllysine mark. Residue 195–198 (NLSE) coordinates ATP. D264 is an active-site residue. The interval 344-477 (MTNGVFDILH…IKKIQQDKKG (134 aa)) is cytidylyltransferase.

This sequence in the N-terminal section; belongs to the carbohydrate kinase PfkB family. The protein in the C-terminal section; belongs to the cytidylyltransferase family. As to quaternary structure, homodimer.

The enzyme catalyses D-glycero-beta-D-manno-heptose 7-phosphate + ATP = D-glycero-beta-D-manno-heptose 1,7-bisphosphate + ADP + H(+). It carries out the reaction D-glycero-beta-D-manno-heptose 1-phosphate + ATP + H(+) = ADP-D-glycero-beta-D-manno-heptose + diphosphate. Its pathway is nucleotide-sugar biosynthesis; ADP-L-glycero-beta-D-manno-heptose biosynthesis; ADP-L-glycero-beta-D-manno-heptose from D-glycero-beta-D-manno-heptose 7-phosphate: step 1/4. It functions in the pathway nucleotide-sugar biosynthesis; ADP-L-glycero-beta-D-manno-heptose biosynthesis; ADP-L-glycero-beta-D-manno-heptose from D-glycero-beta-D-manno-heptose 7-phosphate: step 3/4. Catalyzes the phosphorylation of D-glycero-D-manno-heptose 7-phosphate at the C-1 position to selectively form D-glycero-beta-D-manno-heptose-1,7-bisphosphate. Its function is as follows. Catalyzes the ADP transfer from ATP to D-glycero-beta-D-manno-heptose 1-phosphate, yielding ADP-D-glycero-beta-D-manno-heptose. The polypeptide is Bifunctional protein HldE (Escherichia coli (strain 55989 / EAEC)).